A 346-amino-acid chain; its full sequence is Biotin synthase (346 aa).

Positions 38–256 constitute a Radical SAM core domain; the sequence is RQVQVSTLLS…IAVARIMMPT (219 aa). [4Fe-4S] cluster contacts are provided by cysteine 53, cysteine 57, and cysteine 60. [2Fe-2S] cluster-binding residues include cysteine 97, cysteine 128, cysteine 188, and arginine 260.

This sequence belongs to the radical SAM superfamily. Biotin synthase family. Homodimer. It depends on [4Fe-4S] cluster as a cofactor. [2Fe-2S] cluster serves as cofactor.

It catalyses the reaction (4R,5S)-dethiobiotin + (sulfur carrier)-SH + 2 reduced [2Fe-2S]-[ferredoxin] + 2 S-adenosyl-L-methionine = (sulfur carrier)-H + biotin + 2 5'-deoxyadenosine + 2 L-methionine + 2 oxidized [2Fe-2S]-[ferredoxin]. It participates in cofactor biosynthesis; biotin biosynthesis; biotin from 7,8-diaminononanoate: step 2/2. Its function is as follows. Catalyzes the conversion of dethiobiotin (DTB) to biotin by the insertion of a sulfur atom into dethiobiotin via a radical-based mechanism. This Shigella flexneri serotype 5b (strain 8401) protein is Biotin synthase.